Reading from the N-terminus, the 181-residue chain is Large ribosomal subunit protein uL6 (181 aa).

Belongs to the universal ribosomal protein uL6 family. Part of the 50S ribosomal subunit.

Its function is as follows. This protein binds to the 23S rRNA, and is important in its secondary structure. It is located near the subunit interface in the base of the L7/L12 stalk, and near the tRNA binding site of the peptidyltransferase center. The chain is Large ribosomal subunit protein uL6 from Synechococcus sp. (strain CC9605).